Reading from the N-terminus, the 276-residue chain is 2,3,4,5-tetrahydropyridine-2,6-dicarboxylate N-succinyltransferase (276 aa).

Arginine 107 and aspartate 144 together coordinate substrate.

The protein belongs to the transferase hexapeptide repeat family. Homotrimer.

It localises to the cytoplasm. The enzyme catalyses (S)-2,3,4,5-tetrahydrodipicolinate + succinyl-CoA + H2O = (S)-2-succinylamino-6-oxoheptanedioate + CoA. It functions in the pathway amino-acid biosynthesis; L-lysine biosynthesis via DAP pathway; LL-2,6-diaminopimelate from (S)-tetrahydrodipicolinate (succinylase route): step 1/3. The chain is 2,3,4,5-tetrahydropyridine-2,6-dicarboxylate N-succinyltransferase from Gluconobacter oxydans (strain 621H) (Gluconobacter suboxydans).